The following is a 611-amino-acid chain: Protein Spindly-A (611 aa).

Residues 1-390 (MEESETVLKL…KENEKIKDEL (390 aa)) adopt a coiled-coil conformation. A disordered region spans residues 487–611 (TCTAESTDGR…PNATTQCPQQ (125 aa)). Basic and acidic residues predominate over residues 493–511 (TDGRIHSKEDLSLSTKEQD). The span at 552–567 (HNCSVTSASPRSTSED) shows a compositional bias: polar residues. Residues 570–583 (SESKRFDEEQEKRK) are compositionally biased toward basic and acidic residues. Residues 602-611 (PNATTQCPQQ) show a composition bias toward polar residues.

This sequence belongs to the Spindly family.

The protein localises to the chromosome. It localises to the centromere. Its subcellular location is the kinetochore. Its function is as follows. Required for the localization of dynein and dynactin to the mitotic kintochore. Dynein is believed to control the initial lateral interaction between the kinetochore and spindle microtubules and to facilitate the subsequent formation of end-on kinetochore-microtubule attachments mediated by the NDC80 complex. The sequence is that of Protein Spindly-A (spdl1-a) from Xenopus laevis (African clawed frog).